A 330-amino-acid polypeptide reads, in one-letter code: Anthranilate phosphoribosyltransferase (330 aa).

Residues Gly-75, 78–79 (GD), Thr-83, 85–88 (NVST), 103–111 (KHGNRAASS), and Ala-115 each bind 5-phospho-alpha-D-ribose 1-diphosphate. An anthranilate-binding site is contributed by Gly-75. Ser-87 is a Mg(2+) binding site. Position 106 (Asn-106) interacts with anthranilate. Arg-161 is a binding site for anthranilate. Asp-220 and Glu-221 together coordinate Mg(2+).

It belongs to the anthranilate phosphoribosyltransferase family. Homodimer. Requires Mg(2+) as cofactor.

It carries out the reaction N-(5-phospho-beta-D-ribosyl)anthranilate + diphosphate = 5-phospho-alpha-D-ribose 1-diphosphate + anthranilate. It functions in the pathway amino-acid biosynthesis; L-tryptophan biosynthesis; L-tryptophan from chorismate: step 2/5. Its function is as follows. Catalyzes the transfer of the phosphoribosyl group of 5-phosphorylribose-1-pyrophosphate (PRPP) to anthranilate to yield N-(5'-phosphoribosyl)-anthranilate (PRA). This Erythrobacter litoralis (strain HTCC2594) protein is Anthranilate phosphoribosyltransferase.